We begin with the raw amino-acid sequence, 1270 residues long: Myosin-3 (1270 aa).

A disordered region spans residues 1 to 20 (MAVIKKGARRKDVKEPKKRS). The 680-residue stretch at 36–715 (VGVSDLTLLS…SLFALEDMRD (680 aa)) folds into the Myosin motor domain. ATP is bound at residue 129 to 136 (GESGAGKT). Phosphoserine is present on serine 357. The interval 404–486 (SIGILDIYGF…PGILAAMNDS (83 aa)) is actin-binding. IQ domains lie at 719-739 (YNMAARIQRAWRRFLQRRIDA) and 740-765 (AIKIQRTIREKKGGNKYVKLRDYGTK). The region spanning 771 to 961 (KERRSMSLLG…TIYVRRGHPA (191 aa)) is the TH1 domain. 3 disordered regions span residues 951 to 1015 (STIY…QKPV), 1029 to 1136 (YNPK…GSSS), and 1215 to 1270 (VQFG…DDDW). The segment covering 980–1000 (IKSKKSKHKSTHKHTHSHRSH) has biased composition (basic residues). A compositionally biased stretch (low complexity) spans 1066–1078 (KKASSSHKSSSAK). Basic and acidic residues predominate over residues 1089-1098 (GVEKNKEPLK). Residues 1107 to 1116 (PIPPPPPPMG) show a composition bias toward pro residues. One can recognise an SH3 domain in the interval 1118 to 1180 (PKDPKFEAAY…PTAYMTPYKD (63 aa)). The segment covering 1215–1234 (VQFGSATVGPTSDNQSNPVG) has biased composition (polar residues). The span at 1256–1270 (ADDDDNDDGDDDDDW) shows a compositional bias: acidic residues.

The protein belongs to the TRAFAC class myosin-kinesin ATPase superfamily. Myosin family. As to quaternary structure, interacts (via myosin motor domain) with SHE4; this interaction is important for proper localization and may regulate the interaction of the motor domain with actin. Interacts (via SH3 domain) with VRP1; this interaction is required for localization to sites of polarized growth and may regulate the interaction of the tail domain with actin. Interacts (via SH3 domain) with PAN1; this interaction is important for late stages of endocytopsis. Interacts (via SH3 domain) with BBC1 and LAS17. Interacts (via C-terminal acidic tail) with ARC19 and ARC40; ARC19 and ARC40 are Arp2/3 complex subunits. Post-translationally, phosphorylation of the TEDS site (Ser-357) is required for the polarization of the actin cytoskeleton and for ligand-induced, but not for constitutive internalization of STE2. Phosphorylation probably activates the myosin-I ATPase. Ser-357 is phosphorylated by CLA4 and STE20 in vitro.

Its subcellular location is the cytoplasm. The protein resides in the cytoskeleton. The protein localises to the actin patch. Functionally, one of two redundant type-I myosins implicated in the organization of the actin cytoskeleton. Required for proper actin cytoskeleton polarization and for the internalization step in endocytosis. At the cell cortex, assembles in patch-like structures together with proteins from the actin-polymerizing machinery and promotes actin assembly. Functions redundantly with LAS17 as actin nucleation-promoting factor (NPF) for the Arp2/3 complex. Motor domain phosphorylation by PAK kinases CLA4 and STE20 promotes CDC42-regulated actin assembly. Functions together with the NPF PAN1 in late stages of endocytosis. Motor domain phosphorylation by PDK1 kinases PKH1 and PKH2, and by SGK kinases YPK1 and YPK2, promotes ligand-induced, but not constitutive endocytosis of the G protein-coupled receptor STE2. The protein is Myosin-3 (MYO3) of Saccharomyces cerevisiae (strain YJM789) (Baker's yeast).